Here is a 134-residue protein sequence, read N- to C-terminus: Cytochrome c-type biogenesis protein CcmE (134 aa).

Residues 1 to 7 (MKRKYRR) are Cytoplasmic-facing. The helical; Signal-anchor for type II membrane protein transmembrane segment at 8-28 (LFVVIITLSIFAGSVVFVLGK) threads the bilayer. Over 29–134 (LKNNVSFFYT…MPNKYKTNNL (106 aa)) the chain is Periplasmic. Heme contacts are provided by H120 and Y124.

It belongs to the CcmE/CycJ family.

The protein localises to the cell inner membrane. Heme chaperone required for the biogenesis of c-type cytochromes. Transiently binds heme delivered by CcmC and transfers the heme to apo-cytochromes in a process facilitated by CcmF and CcmH. This Ehrlichia ruminantium (strain Gardel) protein is Cytochrome c-type biogenesis protein CcmE.